Here is a 135-residue protein sequence, read N- to C-terminus: Ribonuclease P protein component (135 aa).

It belongs to the RnpA family. As to quaternary structure, consists of a catalytic RNA component (M1 or rnpB) and a protein subunit.

The enzyme catalyses Endonucleolytic cleavage of RNA, removing 5'-extranucleotides from tRNA precursor.. Its function is as follows. RNaseP catalyzes the removal of the 5'-leader sequence from pre-tRNA to produce the mature 5'-terminus. It can also cleave other RNA substrates such as 4.5S RNA. The protein component plays an auxiliary but essential role in vivo by binding to the 5'-leader sequence and broadening the substrate specificity of the ribozyme. This Saccharophagus degradans (strain 2-40 / ATCC 43961 / DSM 17024) protein is Ribonuclease P protein component.